The following is a 208-amino-acid chain: Ribosomal RNA large subunit methyltransferase E (208 aa).

Residues Gly63, Trp65, Asp83, Asp99, and Asp124 each coordinate S-adenosyl-L-methionine. The Proton acceptor role is filled by Lys164.

The protein belongs to the class I-like SAM-binding methyltransferase superfamily. RNA methyltransferase RlmE family.

Its subcellular location is the cytoplasm. The catalysed reaction is uridine(2552) in 23S rRNA + S-adenosyl-L-methionine = 2'-O-methyluridine(2552) in 23S rRNA + S-adenosyl-L-homocysteine + H(+). Functionally, specifically methylates the uridine in position 2552 of 23S rRNA at the 2'-O position of the ribose in the fully assembled 50S ribosomal subunit. In Salmonella arizonae (strain ATCC BAA-731 / CDC346-86 / RSK2980), this protein is Ribosomal RNA large subunit methyltransferase E.